The chain runs to 290 residues: MEWSLTQSKLLAFHRLMRTDKPIGALLLLWPTLWALWVATPGMPQLWILAVFVAGVWLMRAAGCVVNDYADRKFDGHVKRTVNRPLPSGAVTEKEARNLFVVLVLLAFLLVLTLNAMTILLSVAALALAWVYPFMKRYTHLPQVVLGAAFGWSIPMAFAAVSESLPLSCWLMFLANILWAVAYDTQYAMVDRDDDIKIGIKSTAILFGRYDTLIIGILQLGVMALMALIGWLNGLGGGYYWAVLVAGALFVYQQKLIANREREACFKAFMNNNYVGLVLFLGLAMSYWHF.

The next 8 helical transmembrane spans lie at Ile-23 to Met-43, Leu-46 to Val-66, Leu-99 to Ile-119, Leu-141 to Val-161, Glu-163 to Tyr-183, Thr-212 to Leu-232, Asn-233 to Gln-253, and Ala-268 to Trp-288.

The protein belongs to the UbiA prenyltransferase family. Mg(2+) is required as a cofactor.

The protein localises to the cell inner membrane. The enzyme catalyses all-trans-octaprenyl diphosphate + 4-hydroxybenzoate = 4-hydroxy-3-(all-trans-octaprenyl)benzoate + diphosphate. It functions in the pathway cofactor biosynthesis; ubiquinone biosynthesis. Functionally, catalyzes the prenylation of para-hydroxybenzoate (PHB) with an all-trans polyprenyl group. Mediates the second step in the final reaction sequence of ubiquinone-8 (UQ-8) biosynthesis, which is the condensation of the polyisoprenoid side chain with PHB, generating the first membrane-bound Q intermediate 3-octaprenyl-4-hydroxybenzoate. This chain is 4-hydroxybenzoate octaprenyltransferase, found in Salmonella paratyphi C (strain RKS4594).